The following is a 205-amino-acid chain: CD83 antigen (205 aa).

The first 19 residues, 1–19 (MSRGLQLLLLSCAYSLAPA), serve as a signal peptide directing secretion. The Ig-like V-type domain occupies 20–114 (TPEVKVACSE…YRCTLQDPDG (95 aa)). At 20–144 (TPEVKVACSE…EETFKKYRAE (125 aa)) the chain is on the extracellular side. Cys-35 and Cys-107 form a disulfide bridge. Over residues 60–69 (METPQEDHLR) the composition is skewed to basic and acidic residues. A disordered region spans residues 60–81 (METPQEDHLRGQHYHQKGQNGS). N-linked (GlcNAc...) asparagine glycans are attached at residues Asn-79, Asn-96, and Asn-117. The chain crosses the membrane as a helical span at residues 145-166 (IVLLLALVIFYLTLIIFTCKFA). The Cytoplasmic portion of the chain corresponds to 167–205 (RLQSIFPDFSKAGMERAFLPVTSPNKHLGLVTPHKTELV).

In terms of assembly, monomer. Homodimer. Homotrimer. Interacts with MARCHF1; this interaction antagonizes MARCHF1-mediated MHC II and CD86 down-regulation. Post-translationally, glycosylated when expressed on activated dendritic cells. In terms of tissue distribution, expressed by activated lymphocytes, Langerhans cells and activatd dendritic cells.

It is found in the membrane. Transmembrane glycoprotein predominantly found on the surface of many immune cells including dendritic cells or lymphocytes that plays various roles in immune response regulation. Plays an essential role in CD4(+) T-selection, differentiation and stability by regulating the activity of the major E3 ubiquitin ligase responsible for controlling MHCII trafficking MARCHF8. Also inhibits MARCHF1 association with MHCII or CD86 to prevent their ubiquitination and subsequent degradation. In addition, acts as an important modulator of protective responses against acute infections. The chain is CD83 antigen (CD83) from Homo sapiens (Human).